Reading from the N-terminus, the 569-residue chain is Sulfite reductase [NADPH] hemoprotein beta-component (569 aa).

The [4Fe-4S] cluster site is built by Cys-434, Cys-440, Cys-479, and Cys-483. Cys-483 is a binding site for siroheme.

Belongs to the nitrite and sulfite reductase 4Fe-4S domain family. As to quaternary structure, alpha(8)-beta(8). The alpha component is a flavoprotein, the beta component is a hemoprotein. The cofactor is siroheme. It depends on [4Fe-4S] cluster as a cofactor.

It catalyses the reaction hydrogen sulfide + 3 NADP(+) + 3 H2O = sulfite + 3 NADPH + 4 H(+). The protein operates within sulfur metabolism; hydrogen sulfide biosynthesis; hydrogen sulfide from sulfite (NADPH route): step 1/1. Functionally, component of the sulfite reductase complex that catalyzes the 6-electron reduction of sulfite to sulfide. This is one of several activities required for the biosynthesis of L-cysteine from sulfate. This is Sulfite reductase [NADPH] hemoprotein beta-component from Staphylococcus saprophyticus subsp. saprophyticus (strain ATCC 15305 / DSM 20229 / NCIMB 8711 / NCTC 7292 / S-41).